We begin with the raw amino-acid sequence, 229 residues long: MRIVLFGAPGVGKGTFAEILSKKENLKHINVGNILRNEIKKESNIGKEVQNVVRSGNLVSDSLIINIVHDEMKNILNKKYKGFILDGFPRNMYQSKELIKMTNIDLFVNIYLPRNILIKKLLGRRICNICDKNFNVSNIQQDSFDMPPILPSKDCIQCNGHTNLIKRKDDNEDIINHRLNSYESDYIPIIQFFKNEKYNLIDFPLRRGIRDFDDFYSILVNYRKNEKLK.

A ribonucleoside 5'-triphosphate is bound at residue 10-15; it reads GVGKGT. Positions 30–59 are NMP; that stretch reads NVGNILRNEIKKESNIGKEVQNVVRSGNLV. Residues arginine 36, 57-59, glycine 87, 87-90, and glutamine 94 contribute to the AMP site; these read NLV and GFPR. The LID stretch occupies residues 123–170; the sequence is GRRICNICDKNFNVSNIQQDSFDMPPILPSKDCIQCNGHTNLIKRKDD. Arginine 178 contributes to the AMP binding site.

The protein belongs to the adenylate kinase family.

It localises to the mitochondrion. It carries out the reaction a ribonucleoside 5'-triphosphate + AMP = a ribonucleoside 5'-diphosphate + ADP. The catalysed reaction is GTP + AMP = GDP + ADP. Inhibited by the dinucleoside pentaphosphate compound P1,P5-di(guanosine-5') pentaphosphate (GP5A). Catalyzes the reversible transfer of the terminal phosphate group between GTP and AMP. Has very low activity with UTP, ITP, CTP and IMP and no activity with ATP, GMP, CMP and UMP in vitro. The polypeptide is GTP:AMP phosphotransferase (Plasmodium falciparum (isolate 3D7)).